A 198-amino-acid chain; its full sequence is Recombination protein RecR (198 aa).

A C4-type zinc finger spans residues 57 to 72 (CSVCHNITDTDPCRIC). The 96-residue stretch at 80-175 (SVICVVQDAK…KVTRIAHGLP (96 aa)) folds into the Toprim domain.

This sequence belongs to the RecR family.

Its function is as follows. May play a role in DNA repair. It seems to be involved in an RecBC-independent recombinational process of DNA repair. It may act with RecF and RecO. The polypeptide is Recombination protein RecR (Halalkalibacterium halodurans (strain ATCC BAA-125 / DSM 18197 / FERM 7344 / JCM 9153 / C-125) (Bacillus halodurans)).